The sequence spans 150 residues: Small heat shock protein HspE (150 aa).

A sHSP domain is found at 27–137 (VDNGDTYPPY…KPRQIAIDVA (111 aa)).

This sequence belongs to the small heat shock protein (HSP20) family.

The polypeptide is Small heat shock protein HspE (hspE) (Bradyrhizobium diazoefficiens (strain JCM 10833 / BCRC 13528 / IAM 13628 / NBRC 14792 / USDA 110)).